The sequence spans 464 residues: Cysteine--tRNA ligase (464 aa).

Cysteine 29 is a Zn(2+) binding site. The short motif at 31 to 41 is the 'HIGH' region element; the sequence is ATVQGDPHIGH. The Zn(2+) site is built by cysteine 207, histidine 232, and glutamate 236. The short motif at 263 to 267 is the 'KMSKS' region element; it reads KMSKS. Lysine 266 provides a ligand contact to ATP.

It belongs to the class-I aminoacyl-tRNA synthetase family. Monomer. Requires Zn(2+) as cofactor.

It localises to the cytoplasm. It catalyses the reaction tRNA(Cys) + L-cysteine + ATP = L-cysteinyl-tRNA(Cys) + AMP + diphosphate. The chain is Cysteine--tRNA ligase from Rhodococcus jostii (strain RHA1).